The following is a 568-amino-acid chain: Proline--tRNA ligase (568 aa).

The protein belongs to the class-II aminoacyl-tRNA synthetase family. ProS type 1 subfamily. Homodimer.

It localises to the cytoplasm. It carries out the reaction tRNA(Pro) + L-proline + ATP = L-prolyl-tRNA(Pro) + AMP + diphosphate. Its function is as follows. Catalyzes the attachment of proline to tRNA(Pro) in a two-step reaction: proline is first activated by ATP to form Pro-AMP and then transferred to the acceptor end of tRNA(Pro). As ProRS can inadvertently accommodate and process non-cognate amino acids such as alanine and cysteine, to avoid such errors it has two additional distinct editing activities against alanine. One activity is designated as 'pretransfer' editing and involves the tRNA(Pro)-independent hydrolysis of activated Ala-AMP. The other activity is designated 'posttransfer' editing and involves deacylation of mischarged Ala-tRNA(Pro). The misacylated Cys-tRNA(Pro) is not edited by ProRS. This Campylobacter jejuni subsp. jejuni serotype O:6 (strain 81116 / NCTC 11828) protein is Proline--tRNA ligase.